Here is a 236-residue protein sequence, read N- to C-terminus: L-aspartate dehydrogenase (236 aa).

NAD(+)-binding positions include 10 to 11 (AI), D31, 58 to 59 (AS), Y66, 80 to 81 (LS), A111, and N162. The active site involves H189. Position 212–215 (212–215 (NPKT)) interacts with NAD(+).

Belongs to the L-aspartate dehydrogenase family. As to quaternary structure, homodimer.

The enzyme catalyses L-aspartate + NADP(+) + H2O = oxaloacetate + NH4(+) + NADPH + H(+). It catalyses the reaction L-aspartate + NAD(+) + H2O = oxaloacetate + NH4(+) + NADH + H(+). The protein operates within cofactor biosynthesis; NAD(+) biosynthesis; iminoaspartate from L-aspartate (dehydrogenase route): step 1/1. Its function is as follows. Specifically catalyzes the NAD or NADP-dependent dehydrogenation of L-aspartate to iminoaspartate. The protein is L-aspartate dehydrogenase of Archaeoglobus fulgidus (strain ATCC 49558 / DSM 4304 / JCM 9628 / NBRC 100126 / VC-16).